Reading from the N-terminus, the 89-residue chain is Large ribosomal subunit protein bL27 (89 aa).

The tract at residues 1–21 (MAHKKAGGSSRNGRDSKGKRL) is disordered.

It belongs to the bacterial ribosomal protein bL27 family.

In Bradyrhizobium sp. (strain ORS 278), this protein is Large ribosomal subunit protein bL27.